The chain runs to 233 residues: 7-cyano-7-deazaguanine synthase (233 aa).

13 to 23 is a binding site for ATP; that stretch reads LSGGLDSTTCL. 4 residues coordinate Zn(2+): cysteine 197, cysteine 206, cysteine 209, and cysteine 212.

This sequence belongs to the QueC family. Zn(2+) is required as a cofactor.

The catalysed reaction is 7-carboxy-7-deazaguanine + NH4(+) + ATP = 7-cyano-7-deazaguanine + ADP + phosphate + H2O + H(+). The protein operates within purine metabolism; 7-cyano-7-deazaguanine biosynthesis. In terms of biological role, catalyzes the ATP-dependent conversion of 7-carboxy-7-deazaguanine (CDG) to 7-cyano-7-deazaguanine (preQ(0)). In Anaeromyxobacter sp. (strain Fw109-5), this protein is 7-cyano-7-deazaguanine synthase.